The following is a 77-amino-acid chain: U8-lycotoxin-Ls1u (77 aa).

Residues 1–20 form the signal peptide; sequence MKLIIFTGLVLFAIVSLIEA. A propeptide spanning residues 21–26 is cleaved from the precursor; sequence QAENEK.

It belongs to the neurotoxin 19 (CSTX) family. 08 (U8-Lctx) subfamily. In terms of processing, contains 4 disulfide bonds. Expressed by the venom gland.

The protein resides in the secreted. The chain is U8-lycotoxin-Ls1u from Lycosa singoriensis (Wolf spider).